The following is a 471-amino-acid chain: UDP-N-acetylmuramate--L-alanine ligase (471 aa).

114-120 (GTHGKTT) lines the ATP pocket.

The protein belongs to the MurCDEF family.

The protein resides in the cytoplasm. The catalysed reaction is UDP-N-acetyl-alpha-D-muramate + L-alanine + ATP = UDP-N-acetyl-alpha-D-muramoyl-L-alanine + ADP + phosphate + H(+). Its pathway is cell wall biogenesis; peptidoglycan biosynthesis. Functionally, cell wall formation. This chain is UDP-N-acetylmuramate--L-alanine ligase, found in Sinorhizobium medicae (strain WSM419) (Ensifer medicae).